The chain runs to 210 residues: Stress-response A/B barrel domain-containing protein DABB1 (210 aa).

2 Stress-response A/B barrel domains span residues 5–100 and 116–204; these read VEHV…AVDW and IGKI…VVEF.

As to quaternary structure, homodimer.

The protein localises to the cytoplasm. It localises to the cytosol. Involved in defense against fungal pathogens. Possesses antifungal activity against diverse pathogenic fungi. The chain is Stress-response A/B barrel domain-containing protein DABB1 from Arabidopsis thaliana (Mouse-ear cress).